The following is a 761-amino-acid chain: uncharacterized protein (761 aa).

The CR-type zinc-finger motif lies at 1 to 84 (MIVKCPICDG…CGGSGKVVKC (84 aa)). Positions 135–200 (GKFYKGVVTR…EKREIDFKYI (66 aa)) constitute an S1 motif domain.

This is an uncharacterized protein from Methanocaldococcus jannaschii (strain ATCC 43067 / DSM 2661 / JAL-1 / JCM 10045 / NBRC 100440) (Methanococcus jannaschii).